The primary structure comprises 426 residues: MKKMIIHGGKRLSGELTIGGAKNSTVALIPAAILADTPVQFDTVPHILDVHNLRLILESMNVHSTFENDVLTIDPTNIEESELPSHAIKSLRASYYFMGALLGRFNRATVTFPGGDNIGPRPIDQHIKGFKALGANVVEENDSVFISTGTEGLHGARIFLDVVSVGATINIILAAVKAHGTTTIENAAKEPEIIDLATFLNNMGAKIRGAGTDVIRIEGVPALHSRATHTIIPDRIETGTYLSLAASIGDGILLKNVIPEHMESFTAKLVEMGVDLQINEDSIYVPRSNDLDPIRVKTMTYPGFATDLQQPITPLLLRANGSSVVIDTIYPQRTQHVEQLRKMGADIRVQDNLIVVGHSSHLQGAHVEAGEIRSGAALMIAGLAASGVTEISRADNILRGYDRVIDKLHTLGADVEIAADEEVPEN.

22–23 (KN) provides a ligand contact to phosphoenolpyruvate. Arg92 is a binding site for UDP-N-acetyl-alpha-D-glucosamine. Asp116 serves as the catalytic Proton donor. UDP-N-acetyl-alpha-D-glucosamine is bound by residues 121-125 (RPIDQ), Asp307, and Ile329.

Belongs to the EPSP synthase family. MurA subfamily.

The protein localises to the cytoplasm. It catalyses the reaction phosphoenolpyruvate + UDP-N-acetyl-alpha-D-glucosamine = UDP-N-acetyl-3-O-(1-carboxyvinyl)-alpha-D-glucosamine + phosphate. It functions in the pathway cell wall biogenesis; peptidoglycan biosynthesis. Cell wall formation. Adds enolpyruvyl to UDP-N-acetylglucosamine. In Lactiplantibacillus plantarum (strain ATCC BAA-793 / NCIMB 8826 / WCFS1) (Lactobacillus plantarum), this protein is UDP-N-acetylglucosamine 1-carboxyvinyltransferase 2.